Consider the following 391-residue polypeptide: Lipid-A-disaccharide synthase (391 aa).

This sequence belongs to the LpxB family.

The enzyme catalyses a lipid X + a UDP-2-N,3-O-bis[(3R)-3-hydroxyacyl]-alpha-D-glucosamine = a lipid A disaccharide + UDP + H(+). It participates in bacterial outer membrane biogenesis; LPS lipid A biosynthesis. Functionally, condensation of UDP-2,3-diacylglucosamine and 2,3-diacylglucosamine-1-phosphate to form lipid A disaccharide, a precursor of lipid A, a phosphorylated glycolipid that anchors the lipopolysaccharide to the outer membrane of the cell. The sequence is that of Lipid-A-disaccharide synthase from Azoarcus sp. (strain BH72).